The primary structure comprises 265 residues: MKIAIAGASGRMGRMLIEAVLAAPDATLAGALDRTGSPQLGQDAGAFLGKQTGVALTDDIERVCAEADYLIDFTRPEGTLAHLDAALRHDVKLVIGTTGFSEPQKAQLRAAGGKIALVFSANMSVGVNVTMKLLEFAAKQFAQGYDIEIIEAHHRHKVDAPSGTALMMGETIAAATGRTLDDCAVYGRHGVTGERDPSTIGFSAIRGGDIVGDHTVLFAGIGERIEITHKSASRVSYAQGALRAARFLAGHQAGFFDMQDVLGLR.

NAD(+) contacts are provided by residues 7–12 (GASGRM) and Asp-33. NADP(+) is bound at residue Arg-34. NAD(+) contacts are provided by residues 96 to 98 (GTT) and 120 to 123 (SANM). His-153 (proton donor/acceptor) is an active-site residue. Residue His-154 participates in (S)-2,3,4,5-tetrahydrodipicolinate binding. Lys-157 functions as the Proton donor in the catalytic mechanism. Residue 163-164 (GT) coordinates (S)-2,3,4,5-tetrahydrodipicolinate.

It belongs to the DapB family.

The protein resides in the cytoplasm. The catalysed reaction is (S)-2,3,4,5-tetrahydrodipicolinate + NAD(+) + H2O = (2S,4S)-4-hydroxy-2,3,4,5-tetrahydrodipicolinate + NADH + H(+). The enzyme catalyses (S)-2,3,4,5-tetrahydrodipicolinate + NADP(+) + H2O = (2S,4S)-4-hydroxy-2,3,4,5-tetrahydrodipicolinate + NADPH + H(+). Its pathway is amino-acid biosynthesis; L-lysine biosynthesis via DAP pathway; (S)-tetrahydrodipicolinate from L-aspartate: step 4/4. Its function is as follows. Catalyzes the conversion of 4-hydroxy-tetrahydrodipicolinate (HTPA) to tetrahydrodipicolinate. This Burkholderia pseudomallei (strain 1106a) protein is 4-hydroxy-tetrahydrodipicolinate reductase.